A 370-amino-acid polypeptide reads, in one-letter code: Queuine tRNA-ribosyltransferase (370 aa).

D89 serves as the catalytic Proton acceptor. Residues 89–93 (DSGGF), D143, Q187, and G214 each bind substrate. The tract at residues 245 to 251 (GVGTPED) is RNA binding. Catalysis depends on D264, which acts as the Nucleophile. Residues 269–273 (TRNAR) form an RNA binding; important for wobble base 34 recognition region. Residues C302, C304, C307, and H333 each coordinate Zn(2+).

It belongs to the queuine tRNA-ribosyltransferase family. Homodimer. Within each dimer, one monomer is responsible for RNA recognition and catalysis, while the other monomer binds to the replacement base PreQ1. Requires Zn(2+) as cofactor.

The enzyme catalyses 7-aminomethyl-7-carbaguanine + guanosine(34) in tRNA = 7-aminomethyl-7-carbaguanosine(34) in tRNA + guanine. Its pathway is tRNA modification; tRNA-queuosine biosynthesis. Functionally, catalyzes the base-exchange of a guanine (G) residue with the queuine precursor 7-aminomethyl-7-deazaguanine (PreQ1) at position 34 (anticodon wobble position) in tRNAs with GU(N) anticodons (tRNA-Asp, -Asn, -His and -Tyr). Catalysis occurs through a double-displacement mechanism. The nucleophile active site attacks the C1' of nucleotide 34 to detach the guanine base from the RNA, forming a covalent enzyme-RNA intermediate. The proton acceptor active site deprotonates the incoming PreQ1, allowing a nucleophilic attack on the C1' of the ribose to form the product. After dissociation, two additional enzymatic reactions on the tRNA convert PreQ1 to queuine (Q), resulting in the hypermodified nucleoside queuosine (7-(((4,5-cis-dihydroxy-2-cyclopenten-1-yl)amino)methyl)-7-deazaguanosine). The protein is Queuine tRNA-ribosyltransferase of Aromatoleum aromaticum (strain DSM 19018 / LMG 30748 / EbN1) (Azoarcus sp. (strain EbN1)).